A 414-amino-acid polypeptide reads, in one-letter code: Myb1 protein (414 aa).

3 Myb-like domains span residues 242–266, 268–320, and 328–381; these read WNEV…LYYG, FEDD…IKIN, and KVKL…TNLN.

It is found in the nucleus. Transcriptional activator. Has a role in the parasite erythrocytic cycle where it directly regulates key genes involved in cell cycle regulation and progression. Binds directly to Myb regulatory elements. In Plasmodium falciparum (isolate 3D7), this protein is Myb1 protein.